Consider the following 599-residue polypeptide: Elongation factor 4 (599 aa).

Residues 2–184 (KHIRNFSIIA…RLVRDIPPPE (183 aa)) enclose the tr-type G domain. GTP contacts are provided by residues 14 to 19 (DHGKST) and 131 to 134 (NKID).

Belongs to the TRAFAC class translation factor GTPase superfamily. Classic translation factor GTPase family. LepA subfamily.

It localises to the cell inner membrane. The catalysed reaction is GTP + H2O = GDP + phosphate + H(+). In terms of biological role, required for accurate and efficient protein synthesis under certain stress conditions. May act as a fidelity factor of the translation reaction, by catalyzing a one-codon backward translocation of tRNAs on improperly translocated ribosomes. Back-translocation proceeds from a post-translocation (POST) complex to a pre-translocation (PRE) complex, thus giving elongation factor G a second chance to translocate the tRNAs correctly. Binds to ribosomes in a GTP-dependent manner. The sequence is that of Elongation factor 4 from Pectobacterium carotovorum subsp. carotovorum (strain PC1).